A 34-amino-acid chain; its full sequence is MSDIN-like toxin proprotein 5 (34 aa).

Residues 1 to 10 constitute a propeptide that is removed on maturation; sequence MSDINTARLP. The cyclopeptide (Tyr-Pro) cross-link spans 11-20; sequence YVVFMSFIPP. The propeptide occupies 21 to 34; that stretch reads CVNDDIQVVLTRGE.

This sequence belongs to the MSDIN fungal toxin family. In terms of processing, processed by the macrocyclase-peptidase enzyme POPB to yield a toxic cyclic decapeptide. POPB first removes 10 residues from the N-terminus. Conformational trapping of the remaining peptide forces the enzyme to release this intermediate rather than proceed to macrocyclization. The enzyme rebinds the remaining peptide in a different conformation and catalyzes macrocyclization of the N-terminal 10 residues.

Its function is as follows. Probable toxin that belongs to the MSDIN-like toxin family responsible for a large number of food poisoning cases and deaths. The polypeptide is MSDIN-like toxin proprotein 5 (Amanita bisporigera (Destroying angel)).